Here is a 123-residue protein sequence, read N- to C-terminus: Small ribosomal subunit protein uS12 (123 aa).

The interval 1 to 30 (MPTIQQLIRKPRQPKVQRSKSQHLQSCPQK) is disordered. The span at 9 to 21 (RKPRQPKVQRSKS) shows a compositional bias: basic residues. The residue at position 89 (D89) is a 3-methylthioaspartic acid.

It belongs to the universal ribosomal protein uS12 family. As to quaternary structure, part of the 30S ribosomal subunit. Contacts proteins S8 and S17. May interact with IF1 in the 30S initiation complex.

Its function is as follows. With S4 and S5 plays an important role in translational accuracy. In terms of biological role, interacts with and stabilizes bases of the 16S rRNA that are involved in tRNA selection in the A site and with the mRNA backbone. Located at the interface of the 30S and 50S subunits, it traverses the body of the 30S subunit contacting proteins on the other side and probably holding the rRNA structure together. The combined cluster of proteins S8, S12 and S17 appears to hold together the shoulder and platform of the 30S subunit. The polypeptide is Small ribosomal subunit protein uS12 (Paracoccus denitrificans (strain Pd 1222)).